Here is a 432-residue protein sequence, read N- to C-terminus: uncharacterized protein (432 aa).

13 consecutive transmembrane segments (helical) span residues 7–27, 29–49, 68–88, 124–144, 156–176, 196–216, 241–261, 266–286, 291–311, 326–346, 358–378, 379–399, and 412–432; these read FIGL…PDIY, GIVI…PLPV, EALT…FMLA, FLSM…IALG, FLLL…IIGS, VGFP…YIYF, LVIF…SEIF, FDSV…LVEV, KIDW…GVIV, ILGN…TIIL, IIVP…LILA, VGMS…NAIV, and IGMI…ILYL.

Belongs to the CitM (TC 2.A.11) transporter family.

Its subcellular location is the cell membrane. This is an uncharacterized protein from Methanocaldococcus jannaschii (strain ATCC 43067 / DSM 2661 / JAL-1 / JCM 10045 / NBRC 100440) (Methanococcus jannaschii).